The chain runs to 317 residues: USG-1 protein homolog (317 aa).

The protein belongs to the aspartate-semialdehyde dehydrogenase family.

In Haemophilus influenzae (strain ATCC 51907 / DSM 11121 / KW20 / Rd), this protein is USG-1 protein homolog (usg).